A 362-amino-acid polypeptide reads, in one-letter code: Cobalt-precorrin-5B C(1)-methyltransferase (362 aa).

This sequence belongs to the CbiD family.

It carries out the reaction Co-precorrin-5B + S-adenosyl-L-methionine = Co-precorrin-6A + S-adenosyl-L-homocysteine. The protein operates within cofactor biosynthesis; adenosylcobalamin biosynthesis; cob(II)yrinate a,c-diamide from sirohydrochlorin (anaerobic route): step 6/10. Functionally, catalyzes the methylation of C-1 in cobalt-precorrin-5B to form cobalt-precorrin-6A. This Burkholderia cenocepacia (strain ATCC BAA-245 / DSM 16553 / LMG 16656 / NCTC 13227 / J2315 / CF5610) (Burkholderia cepacia (strain J2315)) protein is Cobalt-precorrin-5B C(1)-methyltransferase.